Reading from the N-terminus, the 130-residue chain is Small ribosomal subunit protein uS9 (130 aa).

Belongs to the universal ribosomal protein uS9 family.

This Sodalis glossinidius (strain morsitans) protein is Small ribosomal subunit protein uS9.